The following is a 233-amino-acid chain: Probable 2-phosphosulfolactate phosphatase (233 aa).

It belongs to the ComB family. Requires Mg(2+) as cofactor.

It carries out the reaction (2R)-O-phospho-3-sulfolactate + H2O = (2R)-3-sulfolactate + phosphate. The protein is Probable 2-phosphosulfolactate phosphatase of Clostridium tetani (strain Massachusetts / E88).